A 92-amino-acid chain; its full sequence is Alpha-conotoxin FrXXA (92 aa).

The signal sequence occupies residues 1–24 (MPKLEMMLLVLLILPLSYFDSAGG). Residues 25–45 (QAVKVDGHGDGMDRYLQRDDR) constitute a propeptide that is removed on maturation. 4 cysteine pairs are disulfide-bonded: Cys63–Cys72, Cys68–Cys80, Cys73–Cys90, and Cys78–Cys92.

This sequence belongs to the conotoxin D superfamily. Homodimer; disulfide-linked. The homodimer contains 10 disulfide bonds. In terms of tissue distribution, expressed by the venom duct.

The protein localises to the secreted. In terms of biological role, alpha-conotoxins act on postsynaptic membranes, they bind to the nicotinic acetylcholine receptors (nAChR) and thus inhibit them. Through its two C-terminal domains, this homodimeric protein would bind to two nAChR allosteric sites, located outside the nAChR C-loop of the principal binding face and at the adjacent binding interface in a clockwise direction. This toxin blocks both neuronal and muscular subtypes: human alpha-7/CHRNA7, human alpha-3-beta-2 (CHRNA3-CHRNB2), human alpha-4-beta-2 (CHRNA4-CHRNB2), mouse adult muscular subtype alpha-1-beta-1-delta-epsilon (CHRNA1-CHRNB1-CHRND-CHRNE), and mouse fetal muscular subtype alpha-1-beta-1-gamma-delta (CHRNA1-CHRNB1-CHRNG-CHRND). Shows different dissociation rates towards the different subtypes, with a very slow rate towards alpha-7 subtype (almost irreversible), followed by the adult muscular subtype, the fetal muscular subtype, alpha-3-beta-2 and alpha-4-beta-2 (almost entirely reversible within a few minutes of washing). This Conus fergusoni (Ferguson's cone) protein is Alpha-conotoxin FrXXA.